The following is a 263-amino-acid chain: Protein PYRICULARIA ORYZAE RESISTANCE 21 (263 aa).

Residues Met1 to Lys68 enclose the HMA domain. Residues Cys12 and Cys15 each contribute to the a metal cation site. Residues Cys126 to Pro153 are disordered. The segment covering Lys139 to Pro153 has biased composition (basic and acidic residues).

Functionally, involved in defense responses. Contributes to slowing defense responses toward Magnaporthe oryzae. The protein is Protein PYRICULARIA ORYZAE RESISTANCE 21 of Oryza sativa subsp. indica (Rice).